The chain runs to 288 residues: CBY1-interacting BAR domain-containing protein 1 (288 aa).

Residues 1–47 constitute a mitochondrion transit peptide; that stretch reads MLRRSLENRDAQTRQLQDAVTNVEKHFGELCQIFAAYVRKTARLRDK. Positions 10 to 220 are BAR-like; that stretch reads DAQTRQLQDA…KIDEEEDLEV (211 aa). Positions 107 to 176 form a coiled coil; sequence KMKRDDLKAT…ETIDNFEKQK (70 aa). The tract at residues 266 to 288 is disordered; the sequence is RKDHQTEDDDEEDEDLDVTEEEN. Positions 271–288 are enriched in acidic residues; it reads TEDDDEEDEDLDVTEEEN.

The protein belongs to the CIBAR family. Homodimer (via BAR-like domain). Heterodimer with FAM92B (via BAR-like domains). Interacts (via BAR-like domain) with CBY1; this interaction is required for targeting FAM92A to centriole and cilium basal body. Interacts (via BAR-like domain) with CBY3; both proteins form a ninefold symmetric structure at the flagellar base; are recruited to the annulus in a mutually dependent manner and regulate annulus positionning.

Its subcellular location is the cytoplasm. The protein resides in the cytoskeleton. The protein localises to the microtubule organizing center. It is found in the centrosome. It localises to the centriole. Its subcellular location is the cilium basal body. The protein resides in the cell projection. The protein localises to the cilium. It is found in the nucleus. It localises to the mitochondrion inner membrane. Its subcellular location is the flagellum. Plays a critical role in regulating mitochondrial ultrastructure and function by maintaining the integrity of mitochondrial morphology, particularly the organization of cristae. Preferentially binds to negatively charged phospholipids like cardiolipin and phosphatidylinositol 4,5-bisphosphate enhancing its interaction with mitochondrial membranes. Induces membrane curvature and tubulation, which are critical for maintaining mitochondrial ultrastructure and the organization of cristae. Plays a crucial role in ciliogenesis. May play a role in limb development through its role in ciliogenesis. Plays a key role in the correct positioning of the annulus, a septin-based ring structure in the sperm flagellum, serving both as a physical barrier and a membrane diffusion barrier that separates the midpiece (MP) from the principal piece (PP). This positioning is essential for proper sperm motility and function. Interacts with CBY3 to form a complex which localizes to the curved membrane region of the flagellar pocket. By doing so, may provide stability and rigidity to the periannular membrane to prevent membrane deformation. This function is crucial for halting annulus migration at the proximal end of the fibrous sheath-containing PP. The chain is CBY1-interacting BAR domain-containing protein 1 from Bos taurus (Bovine).